Reading from the N-terminus, the 696-residue chain is Glycosyltransferase GlyA (696 aa).

The tract at residues 1–301 is GT2 domain; sequence MLVDDKITVI…NQLSRQEESE (301 aa). The tract at residues 302–556 is GT8 domain; sequence KKAIVLAANY…TELGQNHHLH (255 aa). Residues 308–313 and 399–400 each bind UDP; these read AANYGY and DC. Residues Asp399, Asp401, and His518 each coordinate Mn(2+). 518 to 524 lines the UDP pocket; the sequence is HYLSHRK.

It in the N-terminal section; belongs to the glycosyltransferase 2 family. In the central section; belongs to the glycosyltransferase 8 family.

The protein operates within protein modification; protein glycosylation. Its function is as follows. Involved in the polymorphic O-glycosylation of the serine-rich repeat protein PsrP. Catalyzes the fourth step in glycosylation of PsrP in this bacteria. Can transfer the sugar from UDP-galactose to the terminal sugar moiety of PsrP-GlcNAc-Glc-Gal or of PsrP-GlcNAc-Glc-Glc (using truncated substrates with the PsrP SSR1 domain). Has hydrolytic activity against UDP-galactose and to a lesser extent against UDP-glucose. The sequence is that of Glycosyltransferase GlyA from Streptococcus pneumoniae serotype 4 (strain ATCC BAA-334 / TIGR4).